A 399-amino-acid chain; its full sequence is Elongation factor Tu 2 (399 aa).

Residues 10-209 (KPHVNIGTIG…QVDGYIPEPE (200 aa)) enclose the tr-type G domain. Positions 19–26 (GHVDHGKT) are G1. 19 to 26 (GHVDHGKT) contacts GTP. Thr-26 is a Mg(2+) binding site. The G2 stretch occupies residues 60 to 64 (GITIA). The segment at 81–84 (DCPG) is G3. Residues 81-85 (DCPGH) and 136-139 (NKAD) contribute to the GTP site. The tract at residues 136 to 139 (NKAD) is G4. The G5 stretch occupies residues 174 to 176 (SAL).

Belongs to the TRAFAC class translation factor GTPase superfamily. Classic translation factor GTPase family. EF-Tu/EF-1A subfamily. In terms of assembly, monomer.

Its subcellular location is the cytoplasm. It catalyses the reaction GTP + H2O = GDP + phosphate + H(+). Functionally, GTP hydrolase that promotes the GTP-dependent binding of aminoacyl-tRNA to the A-site of ribosomes during protein biosynthesis. The protein is Elongation factor Tu 2 of Syntrophotalea carbinolica (strain DSM 2380 / NBRC 103641 / GraBd1) (Pelobacter carbinolicus).